The chain runs to 224 residues: Agamous-like MADS-box protein AGL9 homolog (224 aa).

In terms of domain architecture, MADS-box spans 3 to 57 (RGRVELKRIEGKINRQVTFAKRRNGLLKKAYELSVLCDAEVALIIFSNRGKLYEF). In terms of domain architecture, K-box spans 89 to 179 (EISSQQEYLK…KQRLMEGSQL (91 aa)).

In terms of tissue distribution, flower specific.

Its subcellular location is the nucleus. Probable transcription factor active in inflorescence development and floral organogenesis. This is Agamous-like MADS-box protein AGL9 homolog (TDR5) from Solanum lycopersicum (Tomato).